The following is a 351-amino-acid chain: Putative F-box protein At5g52610 (351 aa).

The region spanning 1–41 (MISEDLLVEILLRLPVKPLARCLCVCKLWATIIRSRYFINL) is the F-box domain.

This is Putative F-box protein At5g52610 from Arabidopsis thaliana (Mouse-ear cress).